A 417-amino-acid chain; its full sequence is D-inositol 3-phosphate glycosyltransferase (417 aa).

His10 is a binding site for 1D-myo-inositol 3-phosphate. Residues 16-17 and Gly24 contribute to the UDP-N-acetyl-alpha-D-glucosamine site; that span reads QP. Residues 21–26, Lys79, Tyr112, Thr136, and Arg156 each bind 1D-myo-inositol 3-phosphate; that span reads DAGGMN. Residues Arg230, Lys235, and Gln296 each contribute to the UDP-N-acetyl-alpha-D-glucosamine site. Mg(2+) contacts are provided by Tyr305, Arg306, and Ala308. Residues Glu318 and Glu326 each contribute to the UDP-N-acetyl-alpha-D-glucosamine site. Thr332 serves as a coordination point for Mg(2+).

It belongs to the glycosyltransferase group 1 family. MshA subfamily. Homodimer.

It carries out the reaction 1D-myo-inositol 3-phosphate + UDP-N-acetyl-alpha-D-glucosamine = 1D-myo-inositol 2-acetamido-2-deoxy-alpha-D-glucopyranoside 3-phosphate + UDP + H(+). In terms of biological role, catalyzes the transfer of a N-acetyl-glucosamine moiety to 1D-myo-inositol 3-phosphate to produce 1D-myo-inositol 2-acetamido-2-deoxy-glucopyranoside 3-phosphate in the mycothiol biosynthesis pathway. The sequence is that of D-inositol 3-phosphate glycosyltransferase from Actinosynnema mirum (strain ATCC 29888 / DSM 43827 / JCM 3225 / NBRC 14064 / NCIMB 13271 / NRRL B-12336 / IMRU 3971 / 101).